Reading from the N-terminus, the 89-residue chain is Defensin-like protein 197 (89 aa).

The N-terminal stretch at 1–26 is a signal peptide; the sequence is MKFVSVFLVLFIFFLVVLEAPEKIEA. Intrachain disulfides connect Cys33-Cys86, Cys46-Cys70, Cys55-Cys81, and Cys59-Cys83.

The protein belongs to the DEFL family. Protease inhibitor I18 (RTI/MTI-2) subfamily.

Its subcellular location is the secreted. The chain is Defensin-like protein 197 (ATTI6) from Arabidopsis thaliana (Mouse-ear cress).